The chain runs to 77 residues: U8-lycotoxin-Ls1o (77 aa).

A signal peptide spans Met-1–Ala-20. Residues Gln-21 to Lys-26 constitute a propeptide that is removed on maturation.

The protein belongs to the neurotoxin 19 (CSTX) family. 08 (U8-Lctx) subfamily. In terms of processing, contains 4 disulfide bonds. In terms of tissue distribution, expressed by the venom gland.

It localises to the secreted. This chain is U8-lycotoxin-Ls1o, found in Lycosa singoriensis (Wolf spider).